Reading from the N-terminus, the 492-residue chain is 2,3-bisphosphoglycerate-independent phosphoglycerate mutase (492 aa).

Positions 11 and 61 each coordinate Mn(2+). Ser-61 functions as the Phosphoserine intermediate in the catalytic mechanism. Residues His-118, 147 to 148 (RD), Arg-178, Arg-184, 248 to 251 (RNDR), and Lys-320 contribute to the substrate site. Asp-386, His-390, Asp-427, His-428, and His-445 together coordinate Mn(2+).

Belongs to the BPG-independent phosphoglycerate mutase family. As to quaternary structure, monomer. Requires Mn(2+) as cofactor.

It catalyses the reaction (2R)-2-phosphoglycerate = (2R)-3-phosphoglycerate. It participates in carbohydrate degradation; glycolysis; pyruvate from D-glyceraldehyde 3-phosphate: step 3/5. Its function is as follows. Catalyzes the interconversion of 2-phosphoglycerate and 3-phosphoglycerate. The polypeptide is 2,3-bisphosphoglycerate-independent phosphoglycerate mutase (Campylobacter jejuni subsp. jejuni serotype O:6 (strain 81116 / NCTC 11828)).